The sequence spans 571 residues: Putative pyruvate decarboxylase C13A11.06 (571 aa).

Residues Asp29 and His118 each contribute to the pyruvate site. Residues Thr395 and 418 to 420 (GSI) each bind thiamine diphosphate. A Mg(2+)-binding site is contributed by Asp450. Thiamine diphosphate is bound by residues 451-452 (GS) and 477-482 (NDGYTI). Asn477 and Gly479 together coordinate Mg(2+). Glu483 contributes to the pyruvate binding site.

It belongs to the TPP enzyme family. In terms of assembly, homotetramer. Mg(2+) is required as a cofactor. It depends on thiamine diphosphate as a cofactor.

The catalysed reaction is a 2-oxocarboxylate + H(+) = an aldehyde + CO2. It carries out the reaction pyruvate + H(+) = acetaldehyde + CO2. The sequence is that of Putative pyruvate decarboxylase C13A11.06 from Schizosaccharomyces pombe (strain 972 / ATCC 24843) (Fission yeast).